We begin with the raw amino-acid sequence, 462 residues long: 3-oxoacyl-[acyl-carrier-protein] synthase I, chloroplastic (462 aa).

Residues 1–35 constitute a chloroplast transit peptide; that stretch reads MHAHAAHALGLRVPPPAFPRRRARPRRRPAAAVLA. The segment at 1-45 is disordered; it reads MHAHAAHALGLRVPPPAFPRRRARPRRRPAAAVLATSAAPQRETD. The segment covering 19-29 has biased composition (basic residues); that stretch reads PRRRARPRRRP. Positions 30–39 are enriched in low complexity; that stretch reads AAAVLATSAA. Residues 47-459 enclose the Ketosynthase family 3 (KS3) domain; the sequence is RKRVVITGMG…GHNSVVVFAP (413 aa). Catalysis depends on for beta-ketoacyl synthase activity residues cysteine 213, histidine 353, and histidine 389.

This sequence belongs to the thiolase-like superfamily. Beta-ketoacyl-ACP synthases family. In terms of assembly, homodimer.

The protein localises to the plastid. It is found in the chloroplast. The enzyme catalyses a fatty acyl-[ACP] + malonyl-[ACP] + H(+) = a 3-oxoacyl-[ACP] + holo-[ACP] + CO2. Its function is as follows. Catalyzes the condensation reaction of fatty acid synthesis by the addition to an acyl acceptor of two carbons from malonyl-ACP. Specific for elongation from C-10 to unsaturated C-16 and C-18 fatty acids. In Hordeum vulgare (Barley), this protein is 3-oxoacyl-[acyl-carrier-protein] synthase I, chloroplastic (KAS12).